Here is a 544-residue protein sequence, read N- to C-terminus: Sialidase (544 aa).

The signal sequence occupies residues 1–22 (MKKAVILFSLFCFLCAIPVVQA). BNR repeat units lie at residues 239–250 (SRSTDGGKTWEK), 318–329 (AKSTDDGKTWSA), and 378–389 (MYSKDGGKNWKM). Residue Glu399 is part of the active site. Residue Arg415 coordinates substrate. The stretch at 425-436 (AITKDLGKTWTE) is one BNR 4 repeat. Residue Arg479 coordinates substrate. Residues 485-496 (KISLDGGVTWSP) form a BNR 5 repeat.

It belongs to the glycosyl hydrolase 33 family.

It is found in the periplasm. It carries out the reaction Hydrolysis of alpha-(2-&gt;3)-, alpha-(2-&gt;6)-, alpha-(2-&gt;8)- glycosidic linkages of terminal sialic acid residues in oligosaccharides, glycoproteins, glycolipids, colominic acid and synthetic substrates.. Sialidases have been suggested to be pathogenic factors in microbial infections. The protein is Sialidase (nanH) of Bacteroides fragilis (strain YCH46).